A 161-amino-acid chain; its full sequence is Small ribosomal subunit protein uS9 (161 aa).

It belongs to the universal ribosomal protein uS9 family.

In Bartonella henselae (strain ATCC 49882 / DSM 28221 / CCUG 30454 / Houston 1) (Rochalimaea henselae), this protein is Small ribosomal subunit protein uS9.